Reading from the N-terminus, the 668-residue chain is MQICQTKLNFTFPNPTNPNFCKPKALQWSPPRRISLLPCRGFSSDEFPVDETFLEKFGPKDKDTEDEARRRNWIERGWAPWEEILTPEADFARKSLNEGEEVPLQSPEAIEAFKMLRPSYRKKKIKEMGITEDEWYAKQFEIRGDKPPPLETSWAGPMVLRQIPPRDWPPRGWEVDRKELEFIREAHKLMAERVWLEDLDKDLRVGEDATVDKMCLERFKVFLKQYKEWVEDNKDRLEEESYKLDQDFYPGRRKRGKDYEDGMYELPFYYPGMVCEGTVTTLHLYQGAFVDIGGVHEGWVPIKGNDWFWIRHFIKVGMHVIVEITAKRDPYRFRFPLELRFVHPNIDHMIFNKFDFPPIFHRDGDTNPDEIRRDCGRPPEPRKDPGSKPEEEGLLSDHPYVDKLWQIHVAEQMILGDYEANPAKYEGKKLSELSDDEDFDEQKDIEYGEAYYKKTKLPKVILKTSVKELDLEAALTERQHHNKLMMEAKARGEGYKIDKLRRNIEMDEYDFLHWRRSLEEREALLRDISSRQALGLPLEEPGRYKPGSFFGKDQYDPTSALYQYDYWGEPKNSEISKQERMKDAHNKSIVGKGNVWYDMSYDDAIKQTIEKRKEGSTLASQEEETESEEEEEDDDDFDDFDYSILSDESSIGYSEQQPLVNGTQVLTD.

The transit peptide at Met-1–Arg-40 directs the protein to the chloroplast. Positions Gly-272–Arg-340 constitute an S1 motif domain. Basic and acidic residues predominate over residues Arg-362–Glu-391. Residues Arg-362–Leu-394 form a disordered region. Ser-434 is modified (phosphoserine). Residues Lys-611–Asp-668 form a disordered region. A compositionally biased stretch (acidic residues) spans Gln-621–Asp-641. The span at Ser-646–Asp-668 shows a compositional bias: polar residues.

Component of the transcriptionally active chromosome (TAC) complexes. Interacts with PTAC7.

The protein localises to the plastid. Its subcellular location is the chloroplast. The chain is Protein PLASTID TRANSCRIPTIONALLY ACTIVE 10 from Arabidopsis thaliana (Mouse-ear cress).